Here is a 60-residue protein sequence, read N- to C-terminus: Large ribosomal subunit protein uL30 (60 aa).

Belongs to the universal ribosomal protein uL30 family. Part of the 50S ribosomal subunit.

The polypeptide is Large ribosomal subunit protein uL30 (Dechloromonas aromatica (strain RCB)).